We begin with the raw amino-acid sequence, 209 residues long: Imidazole glycerol phosphate synthase subunit HisH (209 aa).

Residues 1–205 form the Glutamine amidotransferase type-1 domain; the sequence is MIAIIDYGMG…KGVVETWKSS (205 aa). The Nucleophile role is filled by Cys79. Catalysis depends on residues His180 and Glu182.

In terms of assembly, heterodimer of HisH and HisF.

It localises to the cytoplasm. It carries out the reaction 5-[(5-phospho-1-deoxy-D-ribulos-1-ylimino)methylamino]-1-(5-phospho-beta-D-ribosyl)imidazole-4-carboxamide + L-glutamine = D-erythro-1-(imidazol-4-yl)glycerol 3-phosphate + 5-amino-1-(5-phospho-beta-D-ribosyl)imidazole-4-carboxamide + L-glutamate + H(+). The enzyme catalyses L-glutamine + H2O = L-glutamate + NH4(+). It participates in amino-acid biosynthesis; L-histidine biosynthesis; L-histidine from 5-phospho-alpha-D-ribose 1-diphosphate: step 5/9. In terms of biological role, IGPS catalyzes the conversion of PRFAR and glutamine to IGP, AICAR and glutamate. The HisH subunit catalyzes the hydrolysis of glutamine to glutamate and ammonia as part of the synthesis of IGP and AICAR. The resulting ammonia molecule is channeled to the active site of HisF. The sequence is that of Imidazole glycerol phosphate synthase subunit HisH from Bacillus anthracis (strain A0248).